Reading from the N-terminus, the 414-residue chain is Patatin-like protein 1 (414 aa).

Residues Leu20–Met224 enclose the PNPLA domain. A GXGXXG motif is present at residues Gly24–Gly29. A GXSXG motif is present at residues Gly62–Gly66. The active-site Nucleophile is Ser64. Asp211 serves as the catalytic Proton acceptor. Residues Asp211–Gly213 carry the DGA/G motif.

This sequence belongs to the patatin family.

Functionally, possesses non-specific lipolytic acyl hydrolase (LAH) activity. Hydrolyzes phospholipids as well as galactolipids. May play a role in disease resistance. This chain is Patatin-like protein 1 (PLP1), found in Oryza sativa subsp. indica (Rice).